The chain runs to 831 residues: Serine/threonine-protein kinase ATG1 (831 aa).

The Protein kinase domain occupies 21-321 (YSVEKEIGKG…FTDFFNNEVV (301 aa)). ATP-binding positions include 27-35 (IGKGSFAVV) and Lys50. The active-site Proton acceptor is the Asp168. 2 stretches are compositionally biased toward polar residues: residues 360–382 (QQES…TGVR) and 405–419 (NSQN…ASQK). Residues 360 to 419 (QQESAHIPPTQTDENTSVQTGVRRTSGKERLATNHPPHQQIHPEDNSQNPEQSYQSASQK) are disordered.

Belongs to the protein kinase superfamily. Ser/Thr protein kinase family. APG1/unc-51/ULK1 subfamily. In terms of assembly, homodimer. Forms a ternary complex with ATG13 and ATG17.

The protein resides in the cytoplasm. It is found in the preautophagosomal structure membrane. The enzyme catalyses L-seryl-[protein] + ATP = O-phospho-L-seryl-[protein] + ADP + H(+). It catalyses the reaction L-threonyl-[protein] + ATP = O-phospho-L-threonyl-[protein] + ADP + H(+). Functionally, serine/threonine protein kinase involved in the cytoplasm to vacuole transport (Cvt) and found to be essential in autophagy, where it is required for the formation of autophagosomes. Involved in the clearance of protein aggregates which cannot be efficiently cleared by the proteasome. Required for selective autophagic degradation of the nucleus (nucleophagy) as well as for mitophagy which contributes to regulate mitochondrial quantity and quality by eliminating the mitochondria to a basal level to fulfill cellular energy requirements and preventing excess ROS production. Also involved in endoplasmic reticulum-specific autophagic process, in selective removal of ER-associated degradation (ERAD) substrates. Plays a key role in ATG9 and ATG23 cycling through the pre-autophagosomal structure and is necessary to promote ATG18 binding to ATG9 through phosphorylation of ATG9. Catalyzes phosphorylation of ATG4, decreasing the interaction between ATG4 and ATG8 and impairing deconjugation of PE-conjugated forms of ATG8. This is Serine/threonine-protein kinase ATG1 from Kluyveromyces lactis (strain ATCC 8585 / CBS 2359 / DSM 70799 / NBRC 1267 / NRRL Y-1140 / WM37) (Yeast).